The primary structure comprises 97 residues: Protein Vpr (97 aa).

A homooligomerization region spans residues 1–42 (MEQAPEDQGPQREPYNEWTLELLEELKREAVRHFPRPWLHSL). Ser-79, Ser-95, and Ser-97 each carry phosphoserine; by host.

It belongs to the HIV-1 VPR protein family. In terms of assembly, homooligomer, may form homodimer. Interacts with p6-gag region of the Pr55 Gag precursor protein through a (Leu-X-X)4 motif near the C-terminus of the P6gag protein. Interacts with host UNG. May interact with host RAD23A/HHR23A. Interacts with host VPRBP/DCAF1, leading to hijack the CUL4A-RBX1-DDB1-DCAF1/VPRBP complex, mediating ubiquitination of host proteins such as TERT and ZGPAT and arrest of the cell cycle in G2 phase. Phosphorylated on several residues by host. These phosphorylations regulate VPR activity for the nuclear import of the HIV-1 pre-integration complex.

It localises to the virion. Its subcellular location is the host nucleus. It is found in the host extracellular space. Functionally, during virus replication, may deplete host UNG protein, and incude G2-M cell cycle arrest. Acts by targeting specific host proteins for degradation by the 26S proteasome, through association with the cellular CUL4A-DDB1 E3 ligase complex by direct interaction with host VPRPB/DCAF-1. Cell cycle arrest reportedly occurs within hours of infection and is not blocked by antiviral agents, suggesting that it is initiated by the VPR carried into the virion. Additionally, VPR induces apoptosis in a cell cycle dependent manner suggesting that these two effects are mechanistically linked. Detected in the serum and cerebrospinal fluid of AIDS patient, VPR may also induce cell death to bystander cells. Its function is as follows. During virus entry, plays a role in the transport of the viral pre-integration (PIC) complex to the host nucleus. This function is crucial for viral infection of non-dividing macrophages. May act directly at the nuclear pore complex, by binding nucleoporins phenylalanine-glycine (FG)-repeat regions. The protein is Protein Vpr of Human immunodeficiency virus type 1 group M subtype B (isolate ARV2/SF2) (HIV-1).